The primary structure comprises 169 residues: Probable glutathione peroxidase 2 (169 aa).

C41 is a catalytic residue.

The protein belongs to the glutathione peroxidase family. Interacts with DJ1A. In terms of tissue distribution, expressed in leaves, stems, flowers, green siliques and roots.

Its subcellular location is the cytoplasm. It localises to the cytosol. The protein resides in the nucleus. It carries out the reaction 2 glutathione + H2O2 = glutathione disulfide + 2 H2O. May constitute a glutathione peroxidase-like protective system against oxidative stresses. The protein is Probable glutathione peroxidase 2 (GPX2) of Arabidopsis thaliana (Mouse-ear cress).